The following is a 159-amino-acid chain: F1845 fimbrial protein (159 aa).

The signal sequence occupies residues 1–21; it reads MKKLAIMAAASMIFTVGSAQA.

This sequence belongs to the Dr-adhesin family.

It localises to the fimbrium. Functionally, hemagglutinins of uropathogenic E.coli mediate adherence to the upper urinary tract. These adhesins bind to the Dr blood group antigen and also agglutinate human erythrocytes in the presence of D-mannose (mannose-resistant hemagglutination (MRHA)). C1845 is a strain responsible for diarrheal disease. In Escherichia coli, this protein is F1845 fimbrial protein (daaE).